Here is an 84-residue protein sequence, read N- to C-terminus: Putative membrane protein insertion efficiency factor (84 aa).

Residues 63-84 (WGGSGYDPVPGADPEHDRRPRG) form a disordered region. Positions 75-84 (DPEHDRRPRG) are enriched in basic and acidic residues.

This sequence belongs to the UPF0161 family.

The protein localises to the cell inner membrane. Functionally, could be involved in insertion of integral membrane proteins into the membrane. This chain is Putative membrane protein insertion efficiency factor, found in Cereibacter sphaeroides (strain ATCC 17025 / ATH 2.4.3) (Rhodobacter sphaeroides).